Reading from the N-terminus, the 316-residue chain is Carbamate kinase-like protein YahI (316 aa).

The protein belongs to the carbamate kinase family.

The sequence is that of Carbamate kinase-like protein YahI (yahI) from Escherichia coli (strain K12).